We begin with the raw amino-acid sequence, 379 residues long: Mating-type protein MAT-1 (379 aa).

The segment at residues 60-117 is a DNA-binding region (alpha box); sequence RARKALNAFVRFRCYYVAIPMFKQWPMKKLSNLIGLLWEADPNKSLWSLMTKAWSTIR.

It belongs to the MATALPHA1 family.

Its subcellular location is the nucleus. Functionally, mating type proteins are sequence specific DNA-binding proteins that act as master switches in fungal differentiation by controlling gene expression in a cell type-specific fashion. Transcriptional activator that induces the transcription of alpha-specific genes. This Curvularia kusanoi (Cochliobolus kusanoi) protein is Mating-type protein MAT-1 (MAT1).